The following is a 1368-amino-acid chain: DNA-directed RNA polymerase subunit beta (1368 aa).

The protein belongs to the RNA polymerase beta chain family. The RNAP catalytic core consists of 2 alpha, 1 beta, 1 beta' and 1 omega subunit. When a sigma factor is associated with the core the holoenzyme is formed, which can initiate transcription.

The enzyme catalyses RNA(n) + a ribonucleoside 5'-triphosphate = RNA(n+1) + diphosphate. Functionally, DNA-dependent RNA polymerase catalyzes the transcription of DNA into RNA using the four ribonucleoside triphosphates as substrates. In Desulfosudis oleivorans (strain DSM 6200 / JCM 39069 / Hxd3) (Desulfococcus oleovorans), this protein is DNA-directed RNA polymerase subunit beta.